A 416-amino-acid chain; its full sequence is Serine hydroxymethyltransferase (416 aa).

(6S)-5,6,7,8-tetrahydrofolate contacts are provided by residues L121 and 125–127 (GHL). The residue at position 229 (K229) is an N6-(pyridoxal phosphate)lysine.

The protein belongs to the SHMT family. In terms of assembly, homodimer. Pyridoxal 5'-phosphate is required as a cofactor.

The protein resides in the cytoplasm. The catalysed reaction is (6R)-5,10-methylene-5,6,7,8-tetrahydrofolate + glycine + H2O = (6S)-5,6,7,8-tetrahydrofolate + L-serine. Its pathway is one-carbon metabolism; tetrahydrofolate interconversion. It participates in amino-acid biosynthesis; glycine biosynthesis; glycine from L-serine: step 1/1. Catalyzes the reversible interconversion of serine and glycine with tetrahydrofolate (THF) serving as the one-carbon carrier. This reaction serves as the major source of one-carbon groups required for the biosynthesis of purines, thymidylate, methionine, and other important biomolecules. Also exhibits THF-independent aldolase activity toward beta-hydroxyamino acids, producing glycine and aldehydes, via a retro-aldol mechanism. The sequence is that of Serine hydroxymethyltransferase from Neisseria meningitidis serogroup A / serotype 4A (strain DSM 15465 / Z2491).